Here is a 147-residue protein sequence, read N- to C-terminus: uncharacterized protein (147 aa).

An ABM domain is found at 50-138 (IVVAGNIKVK…LLAKPAEIKI (89 aa)).

This sequence belongs to the LsrG family.

This is an uncharacterized protein from Synechocystis sp. (strain ATCC 27184 / PCC 6803 / Kazusa).